The chain runs to 120 residues: Ribosome-binding factor A (120 aa).

This sequence belongs to the RbfA family. As to quaternary structure, monomer. Binds 30S ribosomal subunits, but not 50S ribosomal subunits or 70S ribosomes.

Its subcellular location is the cytoplasm. Its function is as follows. One of several proteins that assist in the late maturation steps of the functional core of the 30S ribosomal subunit. Associates with free 30S ribosomal subunits (but not with 30S subunits that are part of 70S ribosomes or polysomes). Required for efficient processing of 16S rRNA. May interact with the 5'-terminal helix region of 16S rRNA. The polypeptide is Ribosome-binding factor A (Borreliella burgdorferi (strain ATCC 35210 / DSM 4680 / CIP 102532 / B31) (Borrelia burgdorferi)).